The primary structure comprises 315 residues: Methionyl-tRNA formyltransferase (315 aa).

113–116 (SLLP) provides a ligand contact to (6S)-5,6,7,8-tetrahydrofolate.

This sequence belongs to the Fmt family.

The enzyme catalyses L-methionyl-tRNA(fMet) + (6R)-10-formyltetrahydrofolate = N-formyl-L-methionyl-tRNA(fMet) + (6S)-5,6,7,8-tetrahydrofolate + H(+). Its function is as follows. Attaches a formyl group to the free amino group of methionyl-tRNA(fMet). The formyl group appears to play a dual role in the initiator identity of N-formylmethionyl-tRNA by promoting its recognition by IF2 and preventing the misappropriation of this tRNA by the elongation apparatus. The sequence is that of Methionyl-tRNA formyltransferase from Shigella sonnei (strain Ss046).